Consider the following 478-residue polypeptide: Siroheme synthase (478 aa).

The interval 1 to 207 (MTANVLFPLF…QRHAEAEAVL (207 aa)) is precorrin-2 dehydrogenase /sirohydrochlorin ferrochelatase. Residues 25–26 (KV) and 46–47 (PS) each bind NAD(+). Phosphoserine is present on serine 132. Positions 220-478 (GSVTLVGAGA…PCPPRTHPIS (259 aa)) are uroporphyrinogen-III C-methyltransferase. Catalysis depends on aspartate 252, which acts as the Proton acceptor. Lysine 274 acts as the Proton donor in catalysis. S-adenosyl-L-methionine is bound by residues 305-307 (GGD), valine 310, 335-336 (TA), methionine 387, and glycine 416.

This sequence in the N-terminal section; belongs to the precorrin-2 dehydrogenase / sirohydrochlorin ferrochelatase family. The protein in the C-terminal section; belongs to the precorrin methyltransferase family.

The enzyme catalyses uroporphyrinogen III + 2 S-adenosyl-L-methionine = precorrin-2 + 2 S-adenosyl-L-homocysteine + H(+). The catalysed reaction is precorrin-2 + NAD(+) = sirohydrochlorin + NADH + 2 H(+). It catalyses the reaction siroheme + 2 H(+) = sirohydrochlorin + Fe(2+). Its pathway is cofactor biosynthesis; adenosylcobalamin biosynthesis; precorrin-2 from uroporphyrinogen III: step 1/1. It functions in the pathway cofactor biosynthesis; adenosylcobalamin biosynthesis; sirohydrochlorin from precorrin-2: step 1/1. It participates in porphyrin-containing compound metabolism; siroheme biosynthesis; precorrin-2 from uroporphyrinogen III: step 1/1. The protein operates within porphyrin-containing compound metabolism; siroheme biosynthesis; siroheme from sirohydrochlorin: step 1/1. Its pathway is porphyrin-containing compound metabolism; siroheme biosynthesis; sirohydrochlorin from precorrin-2: step 1/1. Its function is as follows. Multifunctional enzyme that catalyzes the SAM-dependent methylations of uroporphyrinogen III at position C-2 and C-7 to form precorrin-2 via precorrin-1. Then it catalyzes the NAD-dependent ring dehydrogenation of precorrin-2 to yield sirohydrochlorin. Finally, it catalyzes the ferrochelation of sirohydrochlorin to yield siroheme. The sequence is that of Siroheme synthase from Xylella fastidiosa (strain M23).